The primary structure comprises 261 residues: Hemin import ATP-binding protein HmuV (261 aa).

An ABC transporter domain is found at 3-243 (LQAQDLSVDR…ANLRRVYGVE (241 aa)). 35–42 (GANGAGKS) contributes to the ATP binding site.

The protein belongs to the ABC transporter superfamily. Heme (hemin) importer (TC 3.A.1.14.5) family. The complex is composed of two ATP-binding proteins (HmuV), two transmembrane proteins (HmuU) and a solute-binding protein (HmuT).

The protein localises to the cell inner membrane. Functionally, part of the ABC transporter complex HmuTUV involved in hemin import. Responsible for energy coupling to the transport system. This chain is Hemin import ATP-binding protein HmuV, found in Bordetella avium (strain 197N).